The following is a 213-amino-acid chain: Holliday junction branch migration complex subunit RuvA (213 aa).

Residues 1–69 are domain I; that stretch reads MISYLKGIVA…EEIPLLYGFS (69 aa). The segment at 70–148 is domain II; it reads SPAERDLFRH…EWRKSAGFFV (79 aa). The flexible linker stretch occupies residues 149 to 158; sequence ATEGPAPGIL. Positions 158–213 are domain III; sequence LEEVQMTLFALGYTAHEVSHALHVVSEDIGLPKDAYVEDWIKQAIAHLSSSEQVSH.

The protein belongs to the RuvA family. Homotetramer. Forms an RuvA(8)-RuvB(12)-Holliday junction (HJ) complex. HJ DNA is sandwiched between 2 RuvA tetramers; dsDNA enters through RuvA and exits via RuvB. An RuvB hexamer assembles on each DNA strand where it exits the tetramer. Each RuvB hexamer is contacted by two RuvA subunits (via domain III) on 2 adjacent RuvB subunits; this complex drives branch migration. In the full resolvosome a probable DNA-RuvA(4)-RuvB(12)-RuvC(2) complex forms which resolves the HJ.

The protein resides in the cytoplasm. Functionally, the RuvA-RuvB-RuvC complex processes Holliday junction (HJ) DNA during genetic recombination and DNA repair, while the RuvA-RuvB complex plays an important role in the rescue of blocked DNA replication forks via replication fork reversal (RFR). RuvA specifically binds to HJ cruciform DNA, conferring on it an open structure. The RuvB hexamer acts as an ATP-dependent pump, pulling dsDNA into and through the RuvAB complex. HJ branch migration allows RuvC to scan DNA until it finds its consensus sequence, where it cleaves and resolves the cruciform DNA. The polypeptide is Holliday junction branch migration complex subunit RuvA (Nostoc sp. (strain PCC 7120 / SAG 25.82 / UTEX 2576)).